Consider the following 198-residue polypeptide: Holliday junction branch migration complex subunit RuvA (198 aa).

Positions M1 to H63 are domain I. The domain II stretch occupies residues T64–K142. Residues A143–K147 form a flexible linker region. The tract at residues A148 to G198 is domain III.

It belongs to the RuvA family. Homotetramer. Forms an RuvA(8)-RuvB(12)-Holliday junction (HJ) complex. HJ DNA is sandwiched between 2 RuvA tetramers; dsDNA enters through RuvA and exits via RuvB. An RuvB hexamer assembles on each DNA strand where it exits the tetramer. Each RuvB hexamer is contacted by two RuvA subunits (via domain III) on 2 adjacent RuvB subunits; this complex drives branch migration. In the full resolvosome a probable DNA-RuvA(4)-RuvB(12)-RuvC(2) complex forms which resolves the HJ.

Its subcellular location is the cytoplasm. In terms of biological role, the RuvA-RuvB-RuvC complex processes Holliday junction (HJ) DNA during genetic recombination and DNA repair, while the RuvA-RuvB complex plays an important role in the rescue of blocked DNA replication forks via replication fork reversal (RFR). RuvA specifically binds to HJ cruciform DNA, conferring on it an open structure. The RuvB hexamer acts as an ATP-dependent pump, pulling dsDNA into and through the RuvAB complex. HJ branch migration allows RuvC to scan DNA until it finds its consensus sequence, where it cleaves and resolves the cruciform DNA. The polypeptide is Holliday junction branch migration complex subunit RuvA (Streptococcus pyogenes serotype M28 (strain MGAS6180)).